The following is a 259-amino-acid chain: GTP cyclohydrolase FolE2 (259 aa).

This sequence belongs to the GTP cyclohydrolase IV family.

It carries out the reaction GTP + H2O = 7,8-dihydroneopterin 3'-triphosphate + formate + H(+). It functions in the pathway cofactor biosynthesis; 7,8-dihydroneopterin triphosphate biosynthesis; 7,8-dihydroneopterin triphosphate from GTP: step 1/1. Its function is as follows. Converts GTP to 7,8-dihydroneopterin triphosphate. The chain is GTP cyclohydrolase FolE2 from Nitratidesulfovibrio vulgaris (strain DSM 19637 / Miyazaki F) (Desulfovibrio vulgaris).